The sequence spans 110 residues: Large ribosomal subunit protein uL22 (110 aa).

This sequence belongs to the universal ribosomal protein uL22 family. Part of the 50S ribosomal subunit.

This protein binds specifically to 23S rRNA; its binding is stimulated by other ribosomal proteins, e.g. L4, L17, and L20. It is important during the early stages of 50S assembly. It makes multiple contacts with different domains of the 23S rRNA in the assembled 50S subunit and ribosome. Functionally, the globular domain of the protein is located near the polypeptide exit tunnel on the outside of the subunit, while an extended beta-hairpin is found that lines the wall of the exit tunnel in the center of the 70S ribosome. In Hahella chejuensis (strain KCTC 2396), this protein is Large ribosomal subunit protein uL22.